A 941-amino-acid polypeptide reads, in one-letter code: Endoglucanase (941 aa).

The N-terminal stretch at 1 to 29 (MKIKQIKQSLSLLLIITLIMSLFVPMASA) is a signal peptide. SLH domains are found at residues 37–94 (NAFP…GLEA), 95–158 (SSKD…LSLP), and 161–224 (QREY…DYLY). Residue Glu373 is the Proton donor of the active site. Glu485 acts as the Nucleophile in catalysis.

Belongs to the glycosyl hydrolase 5 (cellulase A) family.

The enzyme catalyses Endohydrolysis of (1-&gt;4)-beta-D-glucosidic linkages in cellulose, lichenin and cereal beta-D-glucans.. The sequence is that of Endoglucanase from Bacillus sp. (strain KSM-635).